Reading from the N-terminus, the 76-residue chain is Dermaseptin-S7 (76 aa).

A signal peptide spans Met-1–Cys-22. Residues Glu-23–Arg-45 constitute a propeptide that is removed on maturation. The disordered stretch occupies residues Glu-25–Arg-45. Residues Glu-30 to Ser-41 are compositionally biased toward acidic residues. Gln-73 is modified (glutamine amide). A propeptide spanning residues Glu-75–Gln-76 is cleaved from the precursor.

Belongs to the frog skin active peptide (FSAP) family. Dermaseptin subfamily. Expressed by the skin glands.

The protein resides in the secreted. Its function is as follows. Antimicrobial peptide. This is Dermaseptin-S7 from Phyllomedusa sauvagei (Sauvage's leaf frog).